The primary structure comprises 427 residues: D-inositol 3-phosphate glycosyltransferase 2 (427 aa).

His-14 contributes to the 1D-myo-inositol 3-phosphate binding site. UDP-N-acetyl-alpha-D-glucosamine is bound by residues 20–21 (QP) and Gly-28. Residues 25-30 (DAGGMN), Lys-83, Tyr-116, Thr-140, and Arg-160 contribute to the 1D-myo-inositol 3-phosphate site. Residues Arg-234, Lys-239, and Val-300 each contribute to the UDP-N-acetyl-alpha-D-glucosamine site. Mg(2+) contacts are provided by Tyr-309, Arg-310, and Ala-312. Glu-322 and Glu-330 together coordinate UDP-N-acetyl-alpha-D-glucosamine. Thr-336 is a binding site for Mg(2+).

This sequence belongs to the glycosyltransferase group 1 family. MshA subfamily. In terms of assembly, homodimer.

It carries out the reaction 1D-myo-inositol 3-phosphate + UDP-N-acetyl-alpha-D-glucosamine = 1D-myo-inositol 2-acetamido-2-deoxy-alpha-D-glucopyranoside 3-phosphate + UDP + H(+). In terms of biological role, catalyzes the transfer of a N-acetyl-glucosamine moiety to 1D-myo-inositol 3-phosphate to produce 1D-myo-inositol 2-acetamido-2-deoxy-glucopyranoside 3-phosphate in the mycothiol biosynthesis pathway. This is D-inositol 3-phosphate glycosyltransferase 2 from Catenulispora acidiphila (strain DSM 44928 / JCM 14897 / NBRC 102108 / NRRL B-24433 / ID139908).